Reading from the N-terminus, the 375-residue chain is Leucoanthocyanidin dioxygenase 1 (375 aa).

The 100-residue stretch at 218–317 folds into the Fe2OG dioxygenase domain; that stretch reads LLLQLKINYY…RLSWVVFCEP (100 aa). Fe cation contacts are provided by histidine 242, aspartate 244, and histidine 298. Arginine 308 lines the 2-oxoglutarate pocket.

This sequence belongs to the iron/ascorbate-dependent oxidoreductase family. Requires L-ascorbate as cofactor. It depends on Fe(2+) as a cofactor.

It catalyses the reaction a (2R,3S,4S)-leucoanthocyanidin + 2-oxoglutarate + O2 = a 4-H-anthocyanidin with a 3-hydroxy group + succinate + CO2 + 2 H2O. It functions in the pathway pigment biosynthesis; anthocyanin biosynthesis. Its function is as follows. Involved in anthocyanin and protoanthocyanidin biosynthesis by catalyzing the oxidation of leucoanthocyanidins into anthocyanidins. This is Leucoanthocyanidin dioxygenase 1 from Oryza sativa subsp. japonica (Rice).